Reading from the N-terminus, the 160-residue chain is SsrA-binding protein (160 aa).

The tract at residues 133–160 (KKEHDKREDLKEREWQRDKERMMKNKGR) is disordered.

This sequence belongs to the SmpB family.

The protein localises to the cytoplasm. In terms of biological role, required for rescue of stalled ribosomes mediated by trans-translation. Binds to transfer-messenger RNA (tmRNA), required for stable association of tmRNA with ribosomes. tmRNA and SmpB together mimic tRNA shape, replacing the anticodon stem-loop with SmpB. tmRNA is encoded by the ssrA gene; the 2 termini fold to resemble tRNA(Ala) and it encodes a 'tag peptide', a short internal open reading frame. During trans-translation Ala-aminoacylated tmRNA acts like a tRNA, entering the A-site of stalled ribosomes, displacing the stalled mRNA. The ribosome then switches to translate the ORF on the tmRNA; the nascent peptide is terminated with the 'tag peptide' encoded by the tmRNA and targeted for degradation. The ribosome is freed to recommence translation, which seems to be the essential function of trans-translation. The sequence is that of SsrA-binding protein from Tolumonas auensis (strain DSM 9187 / NBRC 110442 / TA 4).